A 269-amino-acid polypeptide reads, in one-letter code: 3-deoxy-manno-octulosonate cytidylyltransferase (269 aa).

It belongs to the KdsB family.

The protein localises to the cytoplasm. It catalyses the reaction 3-deoxy-alpha-D-manno-oct-2-ulosonate + CTP = CMP-3-deoxy-beta-D-manno-octulosonate + diphosphate. Its pathway is nucleotide-sugar biosynthesis; CMP-3-deoxy-D-manno-octulosonate biosynthesis; CMP-3-deoxy-D-manno-octulosonate from 3-deoxy-D-manno-octulosonate and CTP: step 1/1. It functions in the pathway bacterial outer membrane biogenesis; lipopolysaccharide biosynthesis. Its function is as follows. Activates KDO (a required 8-carbon sugar) for incorporation into bacterial lipopolysaccharide in Gram-negative bacteria. The polypeptide is 3-deoxy-manno-octulosonate cytidylyltransferase (Cupriavidus necator (strain ATCC 17699 / DSM 428 / KCTC 22496 / NCIMB 10442 / H16 / Stanier 337) (Ralstonia eutropha)).